The following is a 732-amino-acid chain: Phosphoribosylformylglycinamidine synthase subunit PurL (732 aa).

Histidine 32 is a catalytic residue. Residue tyrosine 35 participates in ATP binding. A Mg(2+)-binding site is contributed by glutamate 81. Substrate-binding positions include 82–85 (SHNH) and arginine 104. The active-site Proton acceptor is the histidine 83. Residue aspartate 105 coordinates Mg(2+). Residue glutamine 230 participates in substrate binding. Aspartate 258 contacts Mg(2+). 302–304 (ESQ) serves as a coordination point for substrate. The ATP site is built by aspartate 485 and glycine 522. Mg(2+) is bound at residue asparagine 523. Residue serine 525 coordinates substrate.

This sequence belongs to the FGAMS family. As to quaternary structure, monomer. Part of the FGAM synthase complex composed of 1 PurL, 1 PurQ and 2 PurS subunits.

It is found in the cytoplasm. It catalyses the reaction N(2)-formyl-N(1)-(5-phospho-beta-D-ribosyl)glycinamide + L-glutamine + ATP + H2O = 2-formamido-N(1)-(5-O-phospho-beta-D-ribosyl)acetamidine + L-glutamate + ADP + phosphate + H(+). The protein operates within purine metabolism; IMP biosynthesis via de novo pathway; 5-amino-1-(5-phospho-D-ribosyl)imidazole from N(2)-formyl-N(1)-(5-phospho-D-ribosyl)glycinamide: step 1/2. Functionally, part of the phosphoribosylformylglycinamidine synthase complex involved in the purines biosynthetic pathway. Catalyzes the ATP-dependent conversion of formylglycinamide ribonucleotide (FGAR) and glutamine to yield formylglycinamidine ribonucleotide (FGAM) and glutamate. The FGAM synthase complex is composed of three subunits. PurQ produces an ammonia molecule by converting glutamine to glutamate. PurL transfers the ammonia molecule to FGAR to form FGAM in an ATP-dependent manner. PurS interacts with PurQ and PurL and is thought to assist in the transfer of the ammonia molecule from PurQ to PurL. This is Phosphoribosylformylglycinamidine synthase subunit PurL from Methanococcus aeolicus (strain ATCC BAA-1280 / DSM 17508 / OCM 812 / Nankai-3).